Reading from the N-terminus, the 465-residue chain is MSNNIGKVVQVIGPVVDIKFANDELPNIFNAIHIKMDDGKILVCEVEQHVGDDIVRTIAMEATEGLRRGVEAVDTGAPISVPVGECVLGRIFNVLGKPLDSGAEVNNEEKYPIHRPAPSFEEQSVVPQMFETGIKVIDLLAPYQRGGKIGLFGGAGVGKTVLIQELINNIAKEHGGLSVFTGVGERSREGNDLYYEMMESGVIKNTALVFGQMNEPPGARMRVALTGLTMAEYFRDQGQDVLLFIDNIFRFSQAGSEVSALLGRIPSAVGYQPTLATEMGALQERITSTTHGSITSVQAVYVPADDLTDPAPATTFNHLDAKTVLSRSIAEIGIYPAVDPLDSSSRILDPRVVGEEHYEVASKVKHILERYKELQDIIAILGVDELADEDKLIVARARRIQKFLSQPFTVAEQFTGMQGRYVPIKETIRGFKEILEGKHDNVPESAFLFAGTIEEVLEKARAMAQ.

153-160 (GGAGVGKT) serves as a coordination point for ATP.

It belongs to the ATPase alpha/beta chains family. In terms of assembly, F-type ATPases have 2 components, CF(1) - the catalytic core - and CF(0) - the membrane proton channel. CF(1) has five subunits: alpha(3), beta(3), gamma(1), delta(1), epsilon(1). CF(0) has three main subunits: a(1), b(2) and c(9-12). The alpha and beta chains form an alternating ring which encloses part of the gamma chain. CF(1) is attached to CF(0) by a central stalk formed by the gamma and epsilon chains, while a peripheral stalk is formed by the delta and b chains.

The protein localises to the cell membrane. The catalysed reaction is ATP + H2O + 4 H(+)(in) = ADP + phosphate + 5 H(+)(out). Its function is as follows. Produces ATP from ADP in the presence of a proton gradient across the membrane. The catalytic sites are hosted primarily by the beta subunits. The sequence is that of ATP synthase subunit beta from Clostridium perfringens (strain ATCC 13124 / DSM 756 / JCM 1290 / NCIMB 6125 / NCTC 8237 / Type A).